We begin with the raw amino-acid sequence, 246 residues long: Small ribosomal subunit protein uS2 (246 aa).

The protein belongs to the universal ribosomal protein uS2 family.

The protein is Small ribosomal subunit protein uS2 of Saccharophagus degradans (strain 2-40 / ATCC 43961 / DSM 17024).